We begin with the raw amino-acid sequence, 344 residues long: Aurora kinase B (344 aa).

A disordered region spans residues 1–22; it reads MAQKENSYPWPYGRQTAPSGLS. Thr35 is subject to Phosphothreonine. A Phosphoserine modification is found at Ser62. Thr64 bears the Phosphothreonine mark. The Protein kinase domain occupies 77–327; that stretch reads FEIGRPLGKG…LAQVSAHPWV (251 aa). ATP-binding positions include 83–91 and Lys106; that span reads LGKGKFGNV. Asp200 (proton acceptor) is an active-site residue. At Lys215 the chain carries N6-acetyllysine. Ser227 is modified (phosphoserine). Residue Thr232 is modified to Phosphothreonine; by autocatalysis.

The protein belongs to the protein kinase superfamily. Ser/Thr protein kinase family. Aurora subfamily. Component of the chromosomal passenger complex (CPC) composed of at least BIRC5/survivin, CDCA8/borealin, INCENP, AURKB or AURKC; predominantly independent AURKB- and AURKC-containing complexes exist. Associates with RACGAP1 during M phase. Interacts with SPDYC; this interaction may be required for proper localization of active, Thr-232-phosphorylated AURKB form during prometaphase and metaphase. Interacts with p53/TP53. Interacts (via the middle kinase domain) with NOC2L (via the N- and C-terminus domains). Interacts with CDCA1. Interacts with EVI5. Interacts with JTB. Interacts with NDC80. Interacts with PSMA3. Interacts with RNF2/RING1B. Interacts with SEPTIN1. Interacts with SIRT2. Interacts with TACC1. Interacts with TTC28. The phosphorylation of Thr-232 requires the binding to INCENP and occurs by means of an autophosphorylation mechanism. Thr-232 phosphorylation is indispensable for the AURKB kinase activity. Post-translationally, acetylated at Lys-215 by KAT5 at kinetochores, increasing AURKB activity and promoting accurate chromosome segregation in mitosis. In terms of processing, ubiquitinated by different BCR (BTB-CUL3-RBX1) E3 ubiquitin ligase complexes. Ubiquitinated by the BCR(KLHL9-KLHL13) E3 ubiquitin ligase complex, ubiquitination leads to removal from mitotic chromosomes and is required for cytokinesis. During anaphase, the BCR(KLHL21) E3 ubiquitin ligase complex recruits the CPC complex from chromosomes to the spindle midzone and mediates the ubiquitination of AURKB. Ubiquitination of AURKB by BCR(KLHL21) E3 ubiquitin ligase complex may not lead to its degradation by the proteasome. Deubiquitinated by USP35; inhibiting CDH1-mediated degradation of AURKB. As to expression, high level expression seen in the thymus. It is also expressed in the spleen, lung, testis, colon, placenta and fetal liver. Expressed during S and G2/M phase and expression is up-regulated in cancer cells during M phase. Not expressed in normal liver, high expression in metastatic liver.

Its subcellular location is the nucleus. It is found in the chromosome. The protein localises to the centromere. It localises to the kinetochore. The protein resides in the cytoplasm. Its subcellular location is the cytoskeleton. It is found in the spindle. The protein localises to the midbody. The enzyme catalyses L-seryl-[protein] + ATP = O-phospho-L-seryl-[protein] + ADP + H(+). The catalysed reaction is L-threonyl-[protein] + ATP = O-phospho-L-threonyl-[protein] + ADP + H(+). With respect to regulation, activity is greatly increased when AURKB is within the CPC complex. In particular, AURKB-phosphorylated INCENP acts as an activator of AURKB. Positive feedback between HASPIN and AURKB contributes to CPC localization. Inhibited by ZM447439. Its function is as follows. Serine/threonine-protein kinase component of the chromosomal passenger complex (CPC), a complex that acts as a key regulator of mitosis. The CPC complex has essential functions at the centromere in ensuring correct chromosome alignment and segregation and is required for chromatin-induced microtubule stabilization and spindle assembly. Involved in the bipolar attachment of spindle microtubules to kinetochores and is a key regulator for the onset of cytokinesis during mitosis. Required for central/midzone spindle assembly and cleavage furrow formation. Key component of the cytokinesis checkpoint, a process required to delay abscission to prevent both premature resolution of intercellular chromosome bridges and accumulation of DNA damage: phosphorylates CHMP4C, leading to retain abscission-competent VPS4 (VPS4A and/or VPS4B) at the midbody ring until abscission checkpoint signaling is terminated at late cytokinesis. AURKB phosphorylates the CPC complex subunits BIRC5/survivin, CDCA8/borealin and INCENP. Phosphorylation of INCENP leads to increased AURKB activity. Other known AURKB substrates involved in centromeric functions and mitosis are CENPA, DES/desmin, GPAF, KIF2C, NSUN2, RACGAP1, SEPTIN1, VIM/vimentin, HASPIN, and histone H3. A positive feedback loop involving HASPIN and AURKB contributes to localization of CPC to centromeres. Phosphorylation of VIM controls vimentin filament segregation in cytokinetic process, whereas histone H3 is phosphorylated at 'Ser-10' and 'Ser-28' during mitosis (H3S10ph and H3S28ph, respectively). AURKB is also required for kinetochore localization of BUB1 and SGO1. Phosphorylation of p53/TP53 negatively regulates its transcriptional activity. Key regulator of active promoters in resting B- and T-lymphocytes: acts by mediating phosphorylation of H3S28ph at active promoters in resting B-cells, inhibiting RNF2/RING1B-mediated ubiquitination of histone H2A and enhancing binding and activity of the USP16 deubiquitinase at transcribed genes. Acts as an inhibitor of CGAS during mitosis: catalyzes phosphorylation of the N-terminus of CGAS during the G2-M transition, blocking CGAS liquid phase separation and activation, and thereby preventing CGAS-induced autoimmunity. Phosphorylates KRT5 during anaphase and telophase. Phosphorylates ATXN10 which promotes phosphorylation of ATXN10 by PLK1 and may play a role in the regulation of cytokinesis and stimulating the proteasomal degradation of ATXN10. The protein is Aurora kinase B (AURKB) of Homo sapiens (Human).